We begin with the raw amino-acid sequence, 276 residues long: Formamidopyrimidine-DNA glycosylase (276 aa).

Pro-2 serves as the catalytic Schiff-base intermediate with DNA. The active-site Proton donor is Glu-3. Residue Lys-60 is the Proton donor; for beta-elimination activity of the active site. DNA is bound by residues Arg-113 and Arg-152. Residues 241–275 (NVFRKTGHPCPRCGHLIEKLIVAQRSTHICPICQK) form an FPG-type zinc finger. The Proton donor; for delta-elimination activity role is filled by Arg-265.

This sequence belongs to the FPG family. Monomer. The cofactor is Zn(2+).

It carries out the reaction Hydrolysis of DNA containing ring-opened 7-methylguanine residues, releasing 2,6-diamino-4-hydroxy-5-(N-methyl)formamidopyrimidine.. It catalyses the reaction 2'-deoxyribonucleotide-(2'-deoxyribose 5'-phosphate)-2'-deoxyribonucleotide-DNA = a 3'-end 2'-deoxyribonucleotide-(2,3-dehydro-2,3-deoxyribose 5'-phosphate)-DNA + a 5'-end 5'-phospho-2'-deoxyribonucleoside-DNA + H(+). Involved in base excision repair of DNA damaged by oxidation or by mutagenic agents. Acts as a DNA glycosylase that recognizes and removes damaged bases. Has a preference for oxidized purines, such as 7,8-dihydro-8-oxoguanine (8-oxoG). Has AP (apurinic/apyrimidinic) lyase activity and introduces nicks in the DNA strand. Cleaves the DNA backbone by beta-delta elimination to generate a single-strand break at the site of the removed base with both 3'- and 5'-phosphates. The chain is Formamidopyrimidine-DNA glycosylase from Protochlamydia amoebophila (strain UWE25).